The sequence spans 219 residues: Oxaloacetate tautomerase YcgM (219 aa).

3 residues coordinate Mg(2+): glutamate 70, glutamate 72, and aspartate 101.

It belongs to the FAH family. The cofactor is a divalent metal cation.

It carries out the reaction oxaloacetate = enol-oxaloacetate. Functionally, tautomerase that converts enol-oxaloacetate to the keto form of oxaloacetate. This chain is Oxaloacetate tautomerase YcgM, found in Escherichia coli (strain K12).